Consider the following 1256-residue polypeptide: N-acetylglucosamine-1-phosphotransferase subunits alpha/beta (1256 aa).

A helical membrane pass occupies residues 22-42 (VCFLGVVVTIVSAFQFGEVVL). N-linked (GlcNAc...) asparagine glycosylation is found at N83, N114, N148, N179, and N250. Intrachain disulfides connect C438/C461, C452/C468, C505/C528, and C519/C535. LNR repeat units follow at residues 438–473 (CAEG…GNSG) and 505–545 (CNQG…ELYK). D449, D464, D467, D516, D531, and D534 together coordinate Ca(2+). Residues N614, N699, N729, N829, and N1009 are each glycosylated (N-linked (GlcNAc...) asparagine). In terms of domain architecture, DMAP1-binding spans 699-798 (NISLLPKDAQ…TFPAVSVKVN (100 aa)). In terms of domain architecture, EF-hand spans 1005–1040 (VQPLNISQVFDEVDTDQSGVLSDREIRTLATRIHEL). Ca(2+) contacts are provided by D1018, D1020, S1022, and E1029. N-linked (GlcNAc...) asparagine glycosylation is present at N1129. Residues 1215-1235 (VLATLIMFTIFSFFAEQLIAL) form a helical membrane-spanning segment.

It belongs to the stealth family. In terms of assembly, hexamer of two alpha, two beta and two gamma (GNPTG) subunits; disulfide-linked. The alpha and/or the beta subunits of the enzyme constitute the catalytic subunits. Interacts with LYSET; facilitates proper localization of GNPTAB. In terms of processing, the alpha- and beta-subunits are generated by a proteolytic cleavage by MBTPS1 protease at the Lys-928-Asp-929 bond. As to expression, expressed in the heart, whole brain, placenta, lung, liver, skeletal muscle, kidney and pancreas.

The protein localises to the golgi apparatus membrane. The enzyme catalyses N(4)-[alpha-D-mannosyl-(1-&gt;2)-alpha-D-mannosyl-(glycan)]-L-asparaginyl-[protein] + UDP-N-acetyl-alpha-D-glucosamine = N(4)-[6-(N-acetyl-alpha-D-glucosaminyl-1-phospho)-alpha-D-mannosyl-(1-&gt;2)-alpha-D-mannosyl-(glycan)]-L-asparaginyl-[protein] + UMP + H(+). Its function is as follows. Catalyzes the formation of mannose 6-phosphate (M6P) markers on high mannose type oligosaccharides in the Golgi apparatus. M6P residues are required to bind to the M6P receptors (MPR), which mediate the vesicular transport of lysosomal enzymes to the endosomal/prelysosomal compartment. The sequence is that of N-acetylglucosamine-1-phosphotransferase subunits alpha/beta (GNPTAB) from Homo sapiens (Human).